The chain runs to 554 residues: Glucose-6-phosphate isomerase (554 aa).

Glu359 acts as the Proton donor in catalysis. Residues His390 and Lys518 contribute to the active site.

Belongs to the GPI family.

The protein localises to the cytoplasm. It catalyses the reaction alpha-D-glucose 6-phosphate = beta-D-fructose 6-phosphate. It functions in the pathway carbohydrate biosynthesis; gluconeogenesis. Its pathway is carbohydrate degradation; glycolysis; D-glyceraldehyde 3-phosphate and glycerone phosphate from D-glucose: step 2/4. Functionally, catalyzes the reversible isomerization of glucose-6-phosphate to fructose-6-phosphate. The polypeptide is Glucose-6-phosphate isomerase (Pseudomonas fluorescens (strain SBW25)).